Consider the following 260-residue polypeptide: Global transcriptional regulator CodY (260 aa).

Residues Met-1 to Leu-159 form a GAF domain region. The segment at residues Ala-207 to Arg-226 is a DNA-binding region (H-T-H motif).

The protein belongs to the CodY family.

It localises to the cytoplasm. Functionally, DNA-binding global transcriptional regulator which is involved in the adaptive response to starvation and acts by directly or indirectly controlling the expression of numerous genes in response to nutrient availability. During rapid exponential growth, CodY is highly active and represses genes whose products allow adaptation to nutrient depletion. The protein is Global transcriptional regulator CodY of Streptococcus equi subsp. zooepidemicus (strain H70).